We begin with the raw amino-acid sequence, 300 residues long: Ribosomal protein bS6--L-glutamate ligase (300 aa).

The ATP-grasp domain maps to 104–287 (MQLLARQGID…IAGKMIRWIE (184 aa)). ATP contacts are provided by residues lysine 141, 178-179 (EY), aspartate 187, and 211-213 (RSN). Mg(2+) is bound by residues aspartate 248, glutamate 260, and asparagine 262. The Mn(2+) site is built by aspartate 248, glutamate 260, and asparagine 262.

This sequence belongs to the RimK family. Requires Mg(2+) as cofactor. It depends on Mn(2+) as a cofactor.

Its function is as follows. An L-glutamate ligase that catalyzes the ATP-dependent post-translational addition of glutamate residues to the C-terminus of ribosomal protein bS6 (RpsF). Is also able to catalyze the synthesis of poly-alpha-glutamate in vitro, via ATP hydrolysis from unprotected glutamate as substrate. The number of glutamate residues added to either RpsF or to poly-alpha-glutamate changes with pH. This chain is Ribosomal protein bS6--L-glutamate ligase, found in Shigella boydii serotype 18 (strain CDC 3083-94 / BS512).